The chain runs to 321 residues: Small ribosomal subunit biogenesis GTPase RsgA (321 aa).

A CP-type G domain is found at 89-248; it reads QSWINRPPVA…VADTPGFNRP (160 aa). GTP is bound by residues 138 to 141 and 190 to 198; these read TKRD and GPSGVGKTS. The Zn(2+) site is built by Cys273, Cys278, His280, and Cys286.

Belongs to the TRAFAC class YlqF/YawG GTPase family. RsgA subfamily. As to quaternary structure, monomer. Associates with 30S ribosomal subunit, binds 16S rRNA. Zn(2+) is required as a cofactor.

The protein localises to the cytoplasm. Its function is as follows. One of several proteins that assist in the late maturation steps of the functional core of the 30S ribosomal subunit. Helps release RbfA from mature subunits. May play a role in the assembly of ribosomal proteins into the subunit. Circularly permuted GTPase that catalyzes slow GTP hydrolysis, GTPase activity is stimulated by the 30S ribosomal subunit. This chain is Small ribosomal subunit biogenesis GTPase RsgA, found in Prochlorococcus marinus (strain MIT 9303).